The following is a 2506-amino-acid chain: Highly reducing polyketide synthase rstn3 (2506 aa).

The 429-residue stretch at valine 8–alanine 436 folds into the Ketosynthase family 3 (KS3) domain. Active-site for beta-ketoacyl synthase activity residues include cysteine 183, histidine 318, and histidine 358. The Malonyl-CoA:ACP transacylase (MAT) domain occupies phenylalanine 547–glycine 875. The tract at residues histidine 941–glutamate 1050 is N-terminal hotdog fold. The 272-residue stretch at histidine 941–glutamate 1212 folds into the PKS/mFAS DH domain. The active-site Proton acceptor; for dehydratase activity is histidine 973. Positions asparagine 1060 to glutamate 1212 are C-terminal hotdog fold. Aspartate 1125 functions as the Proton donor; for dehydratase activity in the catalytic mechanism. A methyltransferase (CMet) domain region spans residues valine 1263–tyrosine 1563. An Enoyl reductase (ER) domain is found at glycine 1827–leucine 2093. Residues alanine 2116–isoleucine 2296 form the Ketoreductase (KR) domain. The Carrier domain occupies alanine 2423–alanine 2501. Serine 2460 carries the O-(pantetheine 4'-phosphoryl)serine modification.

Requires pantetheine 4'-phosphate as cofactor.

The protein operates within antifungal biosynthesis. In terms of biological role, highly reducing polyketide synthase; part of the gene cluster that mediates the biosynthesis of the tetrahydropyranyl antifungal agent restricticin that acts as an inhibitor of CYP51 and blocks the ergosterol biosynthesis. The highly reducing polyketide synthase rstn3, the short chain dehydrogenase rstn4, the cyclase rstn5, the FAD-dependent monooxygenase rstn6 and the enoylreductase rstn7 are required to generate the first stable intermediate desmethylrestrictinol. Rstn3 with rstn7 biosynthesize the first polyketide chain intermediate that is reduced by rstn4, followed by epoxidation by rstn6 before 6-endo cyclization via epoxide opening by rstn5 leads to desmethylrestrictinol. The methyltransferase rstn1 then catalyzes the C4 O-methylation of desmethylrestrictinol to produce restrictinol, and the nonribosomal peptide synthetase rstn8 catalyzes the C3 esterification of restrictinol with glycine that leads to restricticin. The sequence is that of Highly reducing polyketide synthase rstn3 from Aspergillus nomiae NRRL (strain ATCC 15546 / NRRL 13137 / CBS 260.88 / M93).